The sequence spans 273 residues: Nickel permease LarQ (273 aa).

The next 5 membrane-spanning stretches (helical) occupy residues 64–84 (LIQL…ILLW), 117–137 (MLFV…FFGL), 159–179 (LAGL…AIAI), 210–230 (LIGA…LELY), and 251–271 (HWRD…FIFW).

It belongs to the CbiQ family. As to quaternary structure, may form an energy-coupling factor (ECF) transporter complex composed of an ATP-binding protein (A component, LarO), a transmembrane protein (T component, LarQ) and a fused possible substrate-capture protein (S component, LarMN) of unknown stoichiometry.

It is found in the cell membrane. Its function is as follows. Probable transmembrane component of the energy-coupling factor (ECF) transporter complex LarMNQO involved in nickel import. This chain is Nickel permease LarQ, found in Lactiplantibacillus plantarum (strain ATCC BAA-793 / NCIMB 8826 / WCFS1) (Lactobacillus plantarum).